The following is a 503-amino-acid chain: Nuclear respiratory factor 1 (503 aa).

The segment at 1–78 is dimerization; sequence MEEHGVTQTE…AHLAAAGPVG (78 aa). Residues 36–57 are disordered; the sequence is SMLSADEDSPSSPEDTSYDDSD. Residues Ser-39, Ser-44, Ser-46, Ser-47, and Ser-52 each carry the phosphoserine; by CK2 modification. The Nuclear localization signal motif lies at 88 to 116; it reads GKKRKRPHVFESNPSIRKRQQTRLLRKLR. The DNA-binding element occupies 109 to 305; that stretch reads TRLLRKLRAT…SIAHLVPSQT (197 aa). A Glycyl lysine isopeptide (Lys-Gly) (interchain with G-Cter in SUMO2) cross-link involves residue Lys-139. The interval 301-476 is required for transcriptional activation; the sequence is VPSQTVVQTF…AQGNGPVQVA (176 aa).

This sequence belongs to the NRF1/Ewg family. In terms of assembly, homodimer. Binds DNA as a dimer. Interacts with PPRC1. In terms of processing, phosphorylation enhances DNA binding. In terms of tissue distribution, ubiquitously expressed with strongest expression in skeletal muscle.

The protein resides in the nucleus. In terms of biological role, transcription factor that activates the expression of the EIF2S1 (EIF2-alpha) gene. Links the transcriptional modulation of key metabolic genes to cellular growth and development. Implicated in the control of nuclear genes required for respiration, heme biosynthesis, and mitochondrial DNA transcription and replication. This Homo sapiens (Human) protein is Nuclear respiratory factor 1 (NRF1).